The primary structure comprises 99 residues: Co-chaperonin GroES (99 aa).

This sequence belongs to the GroES chaperonin family. Heptamer of 7 subunits arranged in a ring. Interacts with the chaperonin GroEL.

The protein localises to the cytoplasm. Functionally, together with the chaperonin GroEL, plays an essential role in assisting protein folding. The GroEL-GroES system forms a nano-cage that allows encapsulation of the non-native substrate proteins and provides a physical environment optimized to promote and accelerate protein folding. GroES binds to the apical surface of the GroEL ring, thereby capping the opening of the GroEL channel. This is Co-chaperonin GroES from Corynebacterium kroppenstedtii (strain DSM 44385 / JCM 11950 / CIP 105744 / CCUG 35717).